A 369-amino-acid chain; its full sequence is 3-isopropylmalate dehydrogenase (369 aa).

77–90 (GPKWDDLPFDKKPE) contacts NAD(+). Residues R97, R107, R135, and D226 each contribute to the substrate site. D226, D250, and D254 together coordinate Mg(2+). An NAD(+)-binding site is contributed by 289-301 (GSAPDIAGKDMAN).

This sequence belongs to the isocitrate and isopropylmalate dehydrogenases family. LeuB type 1 subfamily. In terms of assembly, homodimer. The cofactor is Mg(2+). Requires Mn(2+) as cofactor.

The protein localises to the cytoplasm. It catalyses the reaction (2R,3S)-3-isopropylmalate + NAD(+) = 4-methyl-2-oxopentanoate + CO2 + NADH. Its pathway is amino-acid biosynthesis; L-leucine biosynthesis; L-leucine from 3-methyl-2-oxobutanoate: step 3/4. In terms of biological role, catalyzes the oxidation of 3-carboxy-2-hydroxy-4-methylpentanoate (3-isopropylmalate) to 3-carboxy-4-methyl-2-oxopentanoate. The product decarboxylates to 4-methyl-2 oxopentanoate. The sequence is that of 3-isopropylmalate dehydrogenase from Paramagnetospirillum magneticum (strain ATCC 700264 / AMB-1) (Magnetospirillum magneticum).